Consider the following 360-residue polypeptide: Phospho-N-acetylmuramoyl-pentapeptide-transferase (360 aa).

The next 10 membrane-spanning stretches (helical) occupy residues 26 to 46 (AIVS…RMIA), 72 to 92 (PTMG…LWAY), 94 to 114 (SNPY…IGFV), 132 to 152 (WKYF…YLAG), 168 to 188 (VMPQ…VGTG), 199 to 219 (GLAI…AWAT), 236 to 256 (AGEL…FLWF), 263 to 283 (VFMG…IAVL), 288 to 308 (FLLV…ILQV), and 338 to 358 (VIVR…ATLK).

This sequence belongs to the glycosyltransferase 4 family. MraY subfamily. The cofactor is Mg(2+).

The protein localises to the cell inner membrane. The catalysed reaction is UDP-N-acetyl-alpha-D-muramoyl-L-alanyl-gamma-D-glutamyl-meso-2,6-diaminopimeloyl-D-alanyl-D-alanine + di-trans,octa-cis-undecaprenyl phosphate = di-trans,octa-cis-undecaprenyl diphospho-N-acetyl-alpha-D-muramoyl-L-alanyl-D-glutamyl-meso-2,6-diaminopimeloyl-D-alanyl-D-alanine + UMP. It participates in cell wall biogenesis; peptidoglycan biosynthesis. Its function is as follows. Catalyzes the initial step of the lipid cycle reactions in the biosynthesis of the cell wall peptidoglycan: transfers peptidoglycan precursor phospho-MurNAc-pentapeptide from UDP-MurNAc-pentapeptide onto the lipid carrier undecaprenyl phosphate, yielding undecaprenyl-pyrophosphoryl-MurNAc-pentapeptide, known as lipid I. This chain is Phospho-N-acetylmuramoyl-pentapeptide-transferase, found in Klebsiella pneumoniae (strain 342).